Consider the following 288-residue polypeptide: HTH-type transcriptional regulator CzcR (288 aa).

Positions 1 to 58 (MELRDLQIFQSVADQGSVSSAAKELNYVQSNVTTRIKQLENELKTPLFYRHKRGMTLT) constitute an HTH lysR-type domain. A DNA-binding region (H-T-H motif) is located at residues 18–37 (VSSAAKELNYVQSNVTTRIK).

It belongs to the LysR transcriptional regulatory family.

The protein is HTH-type transcriptional regulator CzcR (czcR) of Bacillus thuringiensis subsp. konkukian (strain 97-27).